The primary structure comprises 278 residues: Digeranylgeranylglyceryl phosphate synthase (278 aa).

8 helical membrane-spanning segments follow: residues 15-35, 36-56, 89-109, 133-153, 159-179, 203-223, 225-245, and 258-278; these read VIGS…WKIV, PIKL…GYII, IVLF…AFII, LIVA…FFEG, TLIP…VKGI, WFIS…PYFF, FNII…LVVL, and AYMK…TLPI.

The protein belongs to the UbiA prenyltransferase family. DGGGP synthase subfamily. Requires Mg(2+) as cofactor.

The protein localises to the cell membrane. The catalysed reaction is sn-3-O-(geranylgeranyl)glycerol 1-phosphate + (2E,6E,10E)-geranylgeranyl diphosphate = 2,3-bis-O-(geranylgeranyl)-sn-glycerol 1-phosphate + diphosphate. Its pathway is membrane lipid metabolism; glycerophospholipid metabolism. Functionally, prenyltransferase that catalyzes the transfer of the geranylgeranyl moiety of geranylgeranyl diphosphate (GGPP) to the C2 hydroxyl of (S)-3-O-geranylgeranylglyceryl phosphate (GGGP). This reaction is the second ether-bond-formation step in the biosynthesis of archaeal membrane lipids. This chain is Digeranylgeranylglyceryl phosphate synthase, found in Sulfurisphaera tokodaii (strain DSM 16993 / JCM 10545 / NBRC 100140 / 7) (Sulfolobus tokodaii).